The sequence spans 521 residues: Phosphoethanolamine transferase EptA (521 aa).

6 consecutive transmembrane segments (helical) span residues 18–38, 47–67, 79–99, 118–138, 150–170, and 182–202; these read AGLL…FVYV, FIAM…LALG, IVFS…KVFL, FLSV…GYVI, APFL…LANT, and FIGG…VSAL.

It belongs to the phosphoethanolamine transferase family. EptA subfamily.

It localises to the cell inner membrane. The protein operates within bacterial outer membrane biogenesis; LPS lipid A biosynthesis. Its function is as follows. Probably catalyzes the addition of a phosphoethanolamine moiety to the dephosphorylated 1-position of the disaccharide backbone of lipid A. Lipid A that is 1-phosphorylated is not a substrate for this enzyme. In Helicobacter pylori (strain ATCC 700392 / 26695) (Campylobacter pylori), this protein is Phosphoethanolamine transferase EptA.